The primary structure comprises 31 residues: Photosystem I reaction center subunit XII (31 aa).

A helical transmembrane segment spans residues 7–26 (QIYIALLTALIPAFFALKLG).

This sequence belongs to the PsaM family.

The protein localises to the plastid. The protein resides in the chloroplast thylakoid membrane. This chain is Photosystem I reaction center subunit XII, found in Euglena mutabilis.